Consider the following 391-residue polypeptide: Phosphoglycerate kinase (391 aa).

Substrate-binding positions include 21-23, arginine 36, 59-62, arginine 113, and arginine 146; these read DLN and HLGR. ATP contacts are provided by residues lysine 197, glutamate 319, and 345–348; that span reads GGDT.

The protein belongs to the phosphoglycerate kinase family. In terms of assembly, monomer.

It is found in the cytoplasm. It carries out the reaction (2R)-3-phosphoglycerate + ATP = (2R)-3-phospho-glyceroyl phosphate + ADP. It functions in the pathway carbohydrate degradation; glycolysis; pyruvate from D-glyceraldehyde 3-phosphate: step 2/5. The sequence is that of Phosphoglycerate kinase from Xanthomonas oryzae pv. oryzae (strain MAFF 311018).